A 307-amino-acid chain; its full sequence is Oxygen-dependent coproporphyrinogen-III oxidase (307 aa).

S94 serves as a coordination point for substrate. H98 and H108 together coordinate a divalent metal cation. Residue H108 is the Proton donor of the active site. Substrate is bound at residue 110–112 (NVR). Residues H147 and H177 each coordinate a divalent metal cation. Residues 242 to 277 (YVEFNLVWDRGTLFGLQSGGRTESILMSMPPLAQWQ) form an important for dimerization region. 260-262 (GGR) lines the substrate pocket.

Belongs to the aerobic coproporphyrinogen-III oxidase family. Homodimer. The cofactor is a divalent metal cation.

The protein resides in the cytoplasm. It catalyses the reaction coproporphyrinogen III + O2 + 2 H(+) = protoporphyrinogen IX + 2 CO2 + 2 H2O. Its pathway is porphyrin-containing compound metabolism; protoporphyrin-IX biosynthesis; protoporphyrinogen-IX from coproporphyrinogen-III (O2 route): step 1/1. Functionally, involved in the heme biosynthesis. Catalyzes the aerobic oxidative decarboxylation of propionate groups of rings A and B of coproporphyrinogen-III to yield the vinyl groups in protoporphyrinogen-IX. This Chromohalobacter salexigens (strain ATCC BAA-138 / DSM 3043 / CIP 106854 / NCIMB 13768 / 1H11) protein is Oxygen-dependent coproporphyrinogen-III oxidase.